The following is a 251-amino-acid chain: uncharacterized protein (251 aa).

This is an uncharacterized protein from Homo sapiens (Human).